Reading from the N-terminus, the 67-residue chain is DNA-directed RNA polymerase subunit omega (67 aa).

Belongs to the RNA polymerase subunit omega family. In terms of assembly, the RNAP catalytic core consists of 2 alpha, 1 beta, 1 beta' and 1 omega subunit. When a sigma factor is associated with the core the holoenzyme is formed, which can initiate transcription.

It carries out the reaction RNA(n) + a ribonucleoside 5'-triphosphate = RNA(n+1) + diphosphate. Promotes RNA polymerase assembly. Latches the N- and C-terminal regions of the beta' subunit thereby facilitating its interaction with the beta and alpha subunits. This is DNA-directed RNA polymerase subunit omega from Ralstonia pickettii (strain 12J).